Reading from the N-terminus, the 850-residue chain is Endoribonuclease ysh-1 (850 aa).

H83, H85, D87, H88, H173, and D194 together coordinate Zn(2+). The active-site Proton donor is H442. H464 is a Zn(2+) binding site. Disordered stretches follow at residues 685–708 (VKRS…PHSH) and 732–784 (SPIV…EQQL). A compositionally biased stretch (polar residues) spans 744-754 (PTTKAITSPSE). Positions 755 to 766 (ETAKSSDVKSDA) are enriched in basic and acidic residues. Residues 767–781 (DADASMDVSEEDEDE) are compositionally biased toward acidic residues.

Belongs to the metallo-beta-lactamase superfamily. RNA-metabolizing metallo-beta-lactamase-like family. CPSF2/YSH1 subfamily.

The protein resides in the nucleus. In terms of biological role, component of the cleavage factor I (CF I) involved in pre-mRNA 3'-end processing. The polypeptide is Endoribonuclease ysh-1 (ysh-1) (Neurospora crassa (strain ATCC 24698 / 74-OR23-1A / CBS 708.71 / DSM 1257 / FGSC 987)).